A 343-amino-acid polypeptide reads, in one-letter code: Diterpene cyclase DtcycB (343 aa).

Residues asparagine 219, serine 223, and glutamate 227 each coordinate Mg(2+).

This sequence belongs to the terpene synthase family. In terms of assembly, homodimer. Requires Mg(2+) as cofactor.

It carries out the reaction (2E,6E,10E)-geranylgeranyl diphosphate + H2O = (R)-nephthenol + diphosphate. The enzyme catalyses (2E,6E,10E)-geranylgeranyl diphosphate = (R)-cembrene A + diphosphate. It catalyses the reaction (2E,6E,10E)-geranylgeranyl diphosphate + H2O = (1S,4E,8E,12E)-2,2,5,9,13-pentamethylcyclopentadeca-4,8,12-trien-1-ol + diphosphate. In terms of biological role, diterpene cyclases that can form multiple diterpene products. The protein is Diterpene cyclase DtcycB of Streptomyces sp.